The primary structure comprises 156 residues: Homeobox-leucine zipper protein ATHB-52 (156 aa).

Positions 8-67 form a DNA-binding region, homeobox; that stretch reads GKNKKKRLTQDQVRQLEKCFTMNKKLEPDLKLQLSNQLGLPQRQVAVWFQNKRARFKTQS. The segment at 68–96 is leucine-zipper; the sequence is LEVQHCTLQSKHEAALSDKAKLEHQVQFL.

This sequence belongs to the HD-ZIP homeobox family. Class I subfamily. Expressed in roots and flowers.

It localises to the nucleus. Its function is as follows. Probable transcription factor. In Arabidopsis thaliana (Mouse-ear cress), this protein is Homeobox-leucine zipper protein ATHB-52 (ATHB-52).